A 369-amino-acid polypeptide reads, in one-letter code: UDP-N-acetyl-3-dehydro-alpha-D-glucosamine 3-aminotranferase (369 aa).

N6-(pyridoxal phosphate)lysine is present on lysine 190.

Belongs to the DegT/DnrJ/EryC1 family. Requires pyridoxal 5'-phosphate as cofactor.

The enzyme catalyses UDP-2-acetamido-3-amino-2,3-dideoxy-alpha-D-glucopyranose + 2-oxoglutarate = UDP-2-acetamido-3-dehydro-2-deoxy-alpha-D-glucopyranose + L-glutamate. Its pathway is bacterial outer membrane biogenesis; LPS lipid A biosynthesis. Functionally, aminotranferase involved in the synthesis of 2,3-diamino-2,3-dideoxy-D-glucopyranose (GlcN3N), which is a component of lipid A in some species. Catalyzes the amination of UDP-2-acetamido-3-dehydro-2-deoxy-alpha-D-glucopyranose (UDP-3-oxo-GlcNAc) to UDP-2-acetamido-3-amino-2,3-dideoxy-alpha-D-glucopyranose (UDP-GlcNAc3N), using L-glutamate as the amine donor. Other amine donors, such as alanine and glutamine, can substitute for glutamate, but product formation is slower. The sequence is that of UDP-N-acetyl-3-dehydro-alpha-D-glucosamine 3-aminotranferase from Acidithiobacillus ferrooxidans (strain ATCC 23270 / DSM 14882 / CIP 104768 / NCIMB 8455) (Ferrobacillus ferrooxidans (strain ATCC 23270)).